The chain runs to 419 residues: MEQLKIMGGRRLEGEVTISGAKNAVLPILAATLLVKGTTVIDNVPRLRDVNTLLAVLNEMGAKAHFTAENQVSVDASNITNPVAPYELVRTMRASVLVLGPLLARFGQAKVSLPGGCAIGARPVDQHIKGMRALGAEVDVCEGYIEAKASRLRGQTLTMDVVTVTGTENILMAAVLADGTTVLHNAALEPEVSDLAHCLNAMGAKIKGIGTSTLTIEGVESLHPCHYRTLPDRIETGTLLVAAAVTGGSIVARQTSPQLLEAVLEKLEAAGCSIRRGADFVALEAKKPLQAVSLRTAPFPAFPTDMQAQFMALNCVAHGSAAIVETIFENRFMHVPELSRMGARIFIEGNTVTTFGVEKLSGAPVMATDLRASACLVIAALAAEGETVISRIYHLDRGYEAMEVKLRGLGAQIERIQEA.

Residue 22 to 23 (KN) coordinates phosphoenolpyruvate. UDP-N-acetyl-alpha-D-glucosamine is bound at residue Arg-93. Cys-117 functions as the Proton donor in the catalytic mechanism. Cys-117 is subject to 2-(S-cysteinyl)pyruvic acid O-phosphothioketal. UDP-N-acetyl-alpha-D-glucosamine contacts are provided by residues 122–126 (RPVDQ), Asp-305, and Ile-327.

The protein belongs to the EPSP synthase family. MurA subfamily.

Its subcellular location is the cytoplasm. The catalysed reaction is phosphoenolpyruvate + UDP-N-acetyl-alpha-D-glucosamine = UDP-N-acetyl-3-O-(1-carboxyvinyl)-alpha-D-glucosamine + phosphate. The protein operates within cell wall biogenesis; peptidoglycan biosynthesis. Cell wall formation. Adds enolpyruvyl to UDP-N-acetylglucosamine. The protein is UDP-N-acetylglucosamine 1-carboxyvinyltransferase of Dichelobacter nodosus (strain VCS1703A).